A 675-amino-acid chain; its full sequence is Methionine--tRNA ligase (675 aa).

Positions 15–25 (PYANGSIHLGH) match the 'HIGH' region motif. Zn(2+) is bound by residues Cys-146, Cys-149, Cys-159, and Cys-162. Residues 331–335 (KMSKS) carry the 'KMSKS' region motif. Lys-334 serves as a coordination point for ATP. One can recognise a tRNA-binding domain in the interval 574–675 (DFAKIDLRIA…EGAQPGMKVK (102 aa)).

This sequence belongs to the class-I aminoacyl-tRNA synthetase family. MetG type 1 subfamily. As to quaternary structure, homodimer. The cofactor is Zn(2+).

Its subcellular location is the cytoplasm. It catalyses the reaction tRNA(Met) + L-methionine + ATP = L-methionyl-tRNA(Met) + AMP + diphosphate. In terms of biological role, is required not only for elongation of protein synthesis but also for the initiation of all mRNA translation through initiator tRNA(fMet) aminoacylation. The chain is Methionine--tRNA ligase from Pseudoalteromonas atlantica (strain T6c / ATCC BAA-1087).